Consider the following 216-residue polypeptide: LexA repressor (216 aa).

Residues 28-48 (RAEIAAELGFSSANSAEEHLR) constitute a DNA-binding region (H-T-H motif). Catalysis depends on for autocatalytic cleavage activity residues Ser134 and Lys171.

Belongs to the peptidase S24 family. As to quaternary structure, homodimer.

It carries out the reaction Hydrolysis of Ala-|-Gly bond in repressor LexA.. Its function is as follows. Represses a number of genes involved in the response to DNA damage (SOS response), including recA and lexA. In the presence of single-stranded DNA, RecA interacts with LexA causing an autocatalytic cleavage which disrupts the DNA-binding part of LexA, leading to derepression of the SOS regulon and eventually DNA repair. The sequence is that of LexA repressor from Paraburkholderia xenovorans (strain LB400).